The primary structure comprises 289 residues: Lipoyl synthase (289 aa).

[4Fe-4S] cluster is bound by residues C33, C38, C44, C59, C63, C66, and S274. Residues F45 to L263 enclose the Radical SAM core domain.

Belongs to the radical SAM superfamily. Lipoyl synthase family. The cofactor is [4Fe-4S] cluster.

Its subcellular location is the cytoplasm. The enzyme catalyses [[Fe-S] cluster scaffold protein carrying a second [4Fe-4S](2+) cluster] + N(6)-octanoyl-L-lysyl-[protein] + 2 oxidized [2Fe-2S]-[ferredoxin] + 2 S-adenosyl-L-methionine + 4 H(+) = [[Fe-S] cluster scaffold protein] + N(6)-[(R)-dihydrolipoyl]-L-lysyl-[protein] + 4 Fe(3+) + 2 hydrogen sulfide + 2 5'-deoxyadenosine + 2 L-methionine + 2 reduced [2Fe-2S]-[ferredoxin]. It participates in protein modification; protein lipoylation via endogenous pathway; protein N(6)-(lipoyl)lysine from octanoyl-[acyl-carrier-protein]: step 2/2. In terms of biological role, catalyzes the radical-mediated insertion of two sulfur atoms into the C-6 and C-8 positions of the octanoyl moiety bound to the lipoyl domains of lipoate-dependent enzymes, thereby converting the octanoylated domains into lipoylated derivatives. In Synechococcus sp. (strain RCC307), this protein is Lipoyl synthase.